A 165-amino-acid chain; its full sequence is Transcription antitermination protein NusB (165 aa).

The disordered stretch occupies residues 1–20; that stretch reads MSDVENGGEPRQPSVKPANQ.

It belongs to the NusB family.

Its function is as follows. Involved in transcription antitermination. Required for transcription of ribosomal RNA (rRNA) genes. Binds specifically to the boxA antiterminator sequence of the ribosomal RNA (rrn) operons. The sequence is that of Transcription antitermination protein NusB from Agrobacterium fabrum (strain C58 / ATCC 33970) (Agrobacterium tumefaciens (strain C58)).